Consider the following 279-residue polypeptide: Pantothenate synthetase (279 aa).

26–33 (MGNLHDGH) serves as a coordination point for ATP. Residue H33 is the Proton donor of the active site. Q57 is a (R)-pantoate binding site. Beta-alanine is bound at residue Q57. 144–147 (GKKD) contacts ATP. (R)-pantoate is bound at residue Q150. An ATP-binding site is contributed by 181–184 (LSSR).

The protein belongs to the pantothenate synthetase family. Homodimer.

The protein localises to the cytoplasm. The catalysed reaction is (R)-pantoate + beta-alanine + ATP = (R)-pantothenate + AMP + diphosphate + H(+). Its pathway is cofactor biosynthesis; (R)-pantothenate biosynthesis; (R)-pantothenate from (R)-pantoate and beta-alanine: step 1/1. Catalyzes the condensation of pantoate with beta-alanine in an ATP-dependent reaction via a pantoyl-adenylate intermediate. The chain is Pantothenate synthetase from Janthinobacterium sp. (strain Marseille) (Minibacterium massiliensis).